Here is a 132-residue protein sequence, read N- to C-terminus: MKAEGGDHSMINLSVQQVLSLWAHGTVLRNLTEMWYWIFLWALFSSLFVHGAAGVLMFVMLQRHRQGRVISVIAVSIGFLASVTGAMITSAAVAGIYRVAGKNMAPLEALVWGVGQTVLTLIISFSRILATL.

The Extracellular portion of the chain corresponds to 1–37; the sequence is MKAEGGDHSMINLSVQQVLSLWAHGTVLRNLTEMWYW. N-linked (GlcNAc...) asparagine glycosylation occurs at Asn-12. The helical transmembrane segment at 38–58 threads the bilayer; sequence IFLWALFSSLFVHGAAGVLMF. At 59 to 68 the chain is on the cytoplasmic side; the sequence is VMLQRHRQGR. The chain crosses the membrane as a helical span at residues 69 to 89; the sequence is VISVIAVSIGFLASVTGAMIT. At 90–104 the chain is on the extracellular side; the sequence is SAAVAGIYRVAGKNM. The chain crosses the membrane as a helical span at residues 105 to 125; the sequence is APLEALVWGVGQTVLTLIISF. The Cytoplasmic portion of the chain corresponds to 126 to 132; sequence SRILATL.

Belongs to the TMEM170 family. Interacts with CTNNB1. Expressed in normal breast tissues. Down-regulated in breast cancer cells (at protein level).

It is found in the cell membrane. Functionally, negatively regulates the canonical Wnt signaling in breast cancer cells. Exerts an inhibitory effect on breast cancer growth by inhibiting CTNNB1 stabilization and nucleus translocation, which reduces the activity of Wnt targets. The protein is Transmembrane protein 170B (TMEM170B) of Homo sapiens (Human).